Here is a 134-residue protein sequence, read N- to C-terminus: uncharacterized protein (134 aa).

The next 3 membrane-spanning stretches (helical) occupy residues 8–28, 54–74, and 113–133; these read FTSLMLTCANIMLQMYFTVMY, GFQAFSALLLLLSGAWITFLL, and LACFAVFFFVYLFLFVSRLVD.

This sequence belongs to the cornichon family.

The protein localises to the endoplasmic reticulum membrane. This is an uncharacterized protein from Schizosaccharomyces pombe (strain 972 / ATCC 24843) (Fission yeast).